We begin with the raw amino-acid sequence, 360 residues long: Peptide chain release factor 1 (360 aa).

Glutamine 235 carries the post-translational modification N5-methylglutamine. Residues 281–307 show a composition bias toward basic and acidic residues; the sequence is ERQRADSERSADRRNQVGSGDRSERIR. Residues 281-310 are disordered; it reads ERQRADSERSADRRNQVGSGDRSERIRTYN.

The protein belongs to the prokaryotic/mitochondrial release factor family. Methylated by PrmC. Methylation increases the termination efficiency of RF1.

It is found in the cytoplasm. Its function is as follows. Peptide chain release factor 1 directs the termination of translation in response to the peptide chain termination codons UAG and UAA. The polypeptide is Peptide chain release factor 1 (Sinorhizobium medicae (strain WSM419) (Ensifer medicae)).